The following is a 163-amino-acid chain: Iron-sulfur cluster assembly protein 2 (163 aa).

The transit peptide at methionine 1–aspartate 48 directs the protein to the mitochondrion.

It belongs to the NifU family. In terms of assembly, component of the core Fe-S cluster (ISC) assembly machinery. [2Fe-2S] cluster is required as a cofactor. As to expression, mostly expressed in leaves, pollen and flowers.

It localises to the mitochondrion matrix. It functions in the pathway cofactor biosynthesis; iron-sulfur cluster biosynthesis. Functionally, scaffold protein for the de novo synthesis of iron-sulfur (Fe-S) clusters within mitochondria, which is required for maturation of both mitochondrial and cytoplasmic [2Fe-2S] and [4Fe-4S] proteins. First, a [2Fe-2S] cluster is transiently assembled on the scaffold protein ISCU (ISU1, ISU2 or ISU3). In a second step, the cluster is released from ISCU, transferred to a glutaredoxin, followed by the formation of mitochondrial [2Fe-2S] proteins, the synthesis of [4Fe-4S] clusters and their target-specific insertion into the recipient apoproteins. Cluster assembly on ISCU depends on the function of the cysteine desulfurase complex NFS1-ISD11, which serves as the sulfur donor for cluster synthesis, the iron-binding protein frataxin as the putative iron donor, and the electron transfer chain comprised of ferredoxin reductase and ferredoxin, which receive their electrons from NADH. The protein is Iron-sulfur cluster assembly protein 2 (ISU2) of Arabidopsis thaliana (Mouse-ear cress).